The chain runs to 296 residues: Formamidopyrimidine-DNA glycosylase (296 aa).

P2 functions as the Schiff-base intermediate with DNA in the catalytic mechanism. E3 acts as the Proton donor in catalysis. Catalysis depends on K58, which acts as the Proton donor; for beta-elimination activity. Positions 104, 126, and 169 each coordinate DNA. An FPG-type zinc finger spans residues 260–296; it reads SVYDRESQACRTPGCGGTVARIVQAGRSTFYCATCQK. The active-site Proton donor; for delta-elimination activity is R286.

This sequence belongs to the FPG family. Monomer. Requires Zn(2+) as cofactor.

The enzyme catalyses Hydrolysis of DNA containing ring-opened 7-methylguanine residues, releasing 2,6-diamino-4-hydroxy-5-(N-methyl)formamidopyrimidine.. The catalysed reaction is 2'-deoxyribonucleotide-(2'-deoxyribose 5'-phosphate)-2'-deoxyribonucleotide-DNA = a 3'-end 2'-deoxyribonucleotide-(2,3-dehydro-2,3-deoxyribose 5'-phosphate)-DNA + a 5'-end 5'-phospho-2'-deoxyribonucleoside-DNA + H(+). Functionally, involved in base excision repair of DNA damaged by oxidation or by mutagenic agents. Acts as a DNA glycosylase that recognizes and removes damaged bases. Has a preference for oxidized purines, such as 7,8-dihydro-8-oxoguanine (8-oxoG). Has AP (apurinic/apyrimidinic) lyase activity and introduces nicks in the DNA strand. Cleaves the DNA backbone by beta-delta elimination to generate a single-strand break at the site of the removed base with both 3'- and 5'-phosphates. The protein is Formamidopyrimidine-DNA glycosylase of Rhizobium johnstonii (strain DSM 114642 / LMG 32736 / 3841) (Rhizobium leguminosarum bv. viciae).